The chain runs to 437 residues: 3-phosphoshikimate 1-carboxyvinyltransferase (437 aa).

3-phosphoshikimate contacts are provided by lysine 24, serine 25, and arginine 29. Position 24 (lysine 24) interacts with phosphoenolpyruvate. Phosphoenolpyruvate contacts are provided by glycine 95 and arginine 123. The 3-phosphoshikimate site is built by serine 168, glutamine 170, aspartate 317, and lysine 344. Glutamine 170 contacts phosphoenolpyruvate. Aspartate 317 acts as the Proton acceptor in catalysis. Arginine 348 and arginine 390 together coordinate phosphoenolpyruvate.

The protein belongs to the EPSP synthase family. Monomer.

The protein localises to the cytoplasm. The enzyme catalyses 3-phosphoshikimate + phosphoenolpyruvate = 5-O-(1-carboxyvinyl)-3-phosphoshikimate + phosphate. Its pathway is metabolic intermediate biosynthesis; chorismate biosynthesis; chorismate from D-erythrose 4-phosphate and phosphoenolpyruvate: step 6/7. In terms of biological role, catalyzes the transfer of the enolpyruvyl moiety of phosphoenolpyruvate (PEP) to the 5-hydroxyl of shikimate-3-phosphate (S3P) to produce enolpyruvyl shikimate-3-phosphate and inorganic phosphate. The sequence is that of 3-phosphoshikimate 1-carboxyvinyltransferase from Wolinella succinogenes (strain ATCC 29543 / DSM 1740 / CCUG 13145 / JCM 31913 / LMG 7466 / NCTC 11488 / FDC 602W) (Vibrio succinogenes).